Here is a 132-residue protein sequence, read N- to C-terminus: NADH-quinone oxidoreductase subunit A 2 (132 aa).

3 helical membrane passes run 10–30 (WALL…LGLG), 66–86 (LVAM…LWAV), and 93–113 (WAGF…LFYL).

This sequence belongs to the complex I subunit 3 family. As to quaternary structure, NDH-1 is composed of 13 different subunits. Subunits NuoA, H, J, K, L, M, N constitute the membrane sector of the complex.

Its subcellular location is the cell inner membrane. It catalyses the reaction a quinone + NADH + 5 H(+)(in) = a quinol + NAD(+) + 4 H(+)(out). Its function is as follows. NDH-1 shuttles electrons from NADH, via FMN and iron-sulfur (Fe-S) centers, to quinones in the respiratory chain. The immediate electron acceptor for the enzyme in this species is believed to be ubiquinone. Couples the redox reaction to proton translocation (for every two electrons transferred, four hydrogen ions are translocated across the cytoplasmic membrane), and thus conserves the redox energy in a proton gradient. The polypeptide is NADH-quinone oxidoreductase subunit A 2 (Pseudomonas aeruginosa (strain UCBPP-PA14)).